A 199-amino-acid chain; its full sequence is MAFELPNLPYAYDALEPHIDKQTMEIHHDKHHNTYVTKLNSAVEGTDLEAKSIEEIVANLDSVPSNIQTAVRNNGGGHLNHSLFWELLSPNSEEKGEVVDKIKEQWGSLDEFKKEFADKAAARFGSGWAWLVVNNGQLEIVTTPNQDNPITEGKTPILGLDVWEHAYYLKYQNKRPDYINAFWNVVNWEKVNELYNATK.

Residues His-27, His-81, Asp-161, and His-165 each contribute to the Fe(3+) site. The Mn(2+) site is built by His-27, His-81, Asp-161, and His-165.

Belongs to the iron/manganese superoxide dismutase family. As to quaternary structure, homodimer. Requires Mn(2+) as cofactor. It depends on Fe(3+) as a cofactor.

It carries out the reaction 2 superoxide + 2 H(+) = H2O2 + O2. Functionally, destroys superoxide anion radicals which are normally produced within the cells and which are toxic to biological systems. Catalyzes the dismutation of superoxide anion radicals into O2 and H2O2 by successive reduction and oxidation of the transition metal ion at the active site. The chain is Superoxide dismutase [Mn/Fe] (sodA) from Staphylococcus epidermidis (strain ATCC 35984 / DSM 28319 / BCRC 17069 / CCUG 31568 / BM 3577 / RP62A).